A 359-amino-acid polypeptide reads, in one-letter code: Oplophorus-luciferin 2-monooxygenase non-catalytic subunit (359 aa).

The first 39 residues, 1 to 39 (MAVNFKFSLLTITIVVNILVYCNASAIKFDVDLEKVPSN), serve as a signal peptide directing secretion. 8 LRR repeats span residues 135-158 (AATL…EMSQ), 160-180 (TKLN…ALSS), 181-203 (DTLA…AFQT), 228-251 (SPKL…AIKL), 255-278 (GPTT…AVEG), 280-300 (QGIL…VWRP), 302-325 (LENL…MWLI), and 331-356 (LAKI…VFHA).

As to quaternary structure, heterotetramer of a catalytic 19 kDa and a non-catalytic 35 kDa subunit.

It localises to the secreted. Non-catalytic subunit of oplophorus-luciferin 2-monooxygenase. May stabilize the active conformation of the catalytic subunit. This chain is Oplophorus-luciferin 2-monooxygenase non-catalytic subunit, found in Oplophorus gracilirostris (Luminous shrimp).